We begin with the raw amino-acid sequence, 221 residues long: Probable GTP-binding protein EngB (221 aa).

An EngB-type G domain is found at 32–205 (GIPQIAFAGR…RKIVDSLITT (174 aa)). Residues 40–47 (GRSNAGKS), 67–71 (GKTKL), 85–88 (DLPG), 152–155 (TKID), and 184–186 (VSN) each bind GTP. Mg(2+) is bound by residues Ser47 and Thr69.

The protein belongs to the TRAFAC class TrmE-Era-EngA-EngB-Septin-like GTPase superfamily. EngB GTPase family. The cofactor is Mg(2+).

Its function is as follows. Necessary for normal cell division and for the maintenance of normal septation. The sequence is that of Probable GTP-binding protein EngB from Leptospira borgpetersenii serovar Hardjo-bovis (strain JB197).